The following is a 123-amino-acid chain: Large ribosomal subunit protein bL21 (123 aa).

This sequence belongs to the bacterial ribosomal protein bL21 family. Part of the 50S ribosomal subunit. Contacts protein L20.

Its function is as follows. This protein binds to 23S rRNA in the presence of protein L20. This chain is Large ribosomal subunit protein bL21, found in Rippkaea orientalis (strain PCC 8801 / RF-1) (Cyanothece sp. (strain PCC 8801)).